The sequence spans 137 residues: Small ribosomal subunit protein uS11 (137 aa).

Over residues 1-10 (MPPKSRSTGP) the composition is skewed to polar residues. 2 disordered regions span residues 1-27 (MPPK…IPHG) and 116-137 (GTIS…RRRV). Positions 12–21 (KTQKTRRRDK) are enriched in basic residues.

The protein belongs to the universal ribosomal protein uS11 family. Part of the 30S ribosomal subunit. Interacts with proteins S7 and S18. Binds to IF-3.

In terms of biological role, located on the platform of the 30S subunit, it bridges several disparate RNA helices of the 16S rRNA. Forms part of the Shine-Dalgarno cleft in the 70S ribosome. This chain is Small ribosomal subunit protein uS11, found in Rhodococcus erythropolis (strain PR4 / NBRC 100887).